Consider the following 362-residue polypeptide: Protein Wnt-16 (362 aa).

The signal sequence occupies residues 1–29 (MDRAALLGLSRLCALWAAVLALFPCGAQG). 3 disulfides stabilise this stretch: Cys-81-Cys-92, Cys-136-Cys-144, and Cys-146-Cys-165. N-linked (GlcNAc...) asparagine glycosylation is present at Asn-140. A glycan (N-linked (GlcNAc...) asparagine) is linked at Asn-186. Cystine bridges form between Cys-218–Cys-232, Cys-220–Cys-227, Cys-291–Cys-322, Cys-307–Cys-317, Cys-321–Cys-361, Cys-337–Cys-352, Cys-339–Cys-349, and Cys-344–Cys-345. A lipid anchor (O-palmitoleoyl serine; by PORCN) is attached at Ser-224. The N-linked (GlcNAc...) asparagine glycan is linked to Asn-308.

Belongs to the Wnt family. In terms of processing, palmitoleoylation is required for efficient binding to frizzled receptors. Depalmitoleoylation leads to Wnt signaling pathway inhibition.

Its subcellular location is the secreted. The protein localises to the extracellular space. It localises to the extracellular matrix. Functionally, ligand for members of the frizzled family of seven transmembrane receptors. Probable developmental protein. May be a signaling molecule which affects the development of discrete regions of tissues. Is likely to signal over only few cell diameters. The protein is Protein Wnt-16 (WNT16) of Bos taurus (Bovine).